Reading from the N-terminus, the 366-residue chain is Ferredoxin--NADP reductase (366 aa).

Positions 51, 59, 64, 104, 139, 308, and 349 each coordinate FAD.

The protein belongs to the ferredoxin--NADP reductase type 2 family. As to quaternary structure, homodimer. FAD is required as a cofactor.

It catalyses the reaction 2 reduced [2Fe-2S]-[ferredoxin] + NADP(+) + H(+) = 2 oxidized [2Fe-2S]-[ferredoxin] + NADPH. The chain is Ferredoxin--NADP reductase from Methylibium petroleiphilum (strain ATCC BAA-1232 / LMG 22953 / PM1).